The chain runs to 88 residues: Parvalbumin beta 3 (88 aa).

An N-acetylalanine modification is found at Ala1. The EF-hand domain maps to 31 to 66 (KSPEEVKKFFAIIDQDHSGFIEEEELKLFLQTFSAG). Positions 44, 46, 48, 50, 52, 55, and 81 each coordinate Ca(2+).

This sequence belongs to the parvalbumin family.

In terms of biological role, in muscle, parvalbumin is thought to be involved in relaxation after contraction. It binds two calcium ions. This chain is Parvalbumin beta 3, found in Merluccius productus (North Pacific hake).